Here is a 130-residue protein sequence, read N- to C-terminus: Small ribosomal subunit protein uS8 (130 aa).

Belongs to the universal ribosomal protein uS8 family. As to quaternary structure, part of the 30S ribosomal subunit. Contacts proteins S5 and S12.

In terms of biological role, one of the primary rRNA binding proteins, it binds directly to 16S rRNA central domain where it helps coordinate assembly of the platform of the 30S subunit. The protein is Small ribosomal subunit protein uS8 of Histophilus somni (strain 129Pt) (Haemophilus somnus).